The following is a 715-amino-acid chain: ATP-dependent DNA helicase Hel308 (715 aa).

The Q motif signature appears at 1-29 (MKVGELNVSEKIKEILRERGIEELYPPQA). ATP is bound by residues Gln28 and 46–53 (IPTASGKT). One can recognise a Helicase ATP-binding domain in the interval 33–197 (TSGVLEGENL…WLNAKLIRSD (165 aa)). The short motif at 145-148 (DEIH) is the DEAH box element. The region spanning 226–422 (WEELVYDAVK…ILRSQILALI (197 aa)) is the Helicase C-terminal domain.

This sequence belongs to the helicase family. Hel308 subfamily. Monomer.

It carries out the reaction Couples ATP hydrolysis with the unwinding of duplex DNA by translocating in the 3'-5' direction.. The catalysed reaction is ATP + H2O = ADP + phosphate + H(+). Its function is as follows. DNA-dependent ATPase and 3'-5' DNA helicase that may be involved in repair of stalled replication forks. Rapidly unwinds double-stranded (ds)DNA with a 3'-overhang, has no strand reannealing capabilities. Binds single-stranded (ss)DNA, dsDNA with a 3'-overhang and ssRNA. In Pyrococcus abyssi (strain GE5 / Orsay), this protein is ATP-dependent DNA helicase Hel308.